Here is a 326-residue protein sequence, read N- to C-terminus: tRNA dimethylallyltransferase 2 (326 aa).

14 to 21 (GPTASGKT) is an ATP binding site. 16 to 21 (TASGKT) is a substrate binding site. An interaction with substrate tRNA region spans residues 39 to 42 (DSMQ).

This sequence belongs to the IPP transferase family. Monomer. Mg(2+) is required as a cofactor.

It carries out the reaction adenosine(37) in tRNA + dimethylallyl diphosphate = N(6)-dimethylallyladenosine(37) in tRNA + diphosphate. Catalyzes the transfer of a dimethylallyl group onto the adenine at position 37 in tRNAs that read codons beginning with uridine, leading to the formation of N6-(dimethylallyl)adenosine (i(6)A). This Geotalea daltonii (strain DSM 22248 / JCM 15807 / FRC-32) (Geobacter daltonii) protein is tRNA dimethylallyltransferase 2.